A 310-amino-acid chain; its full sequence is Ribosomal RNA small subunit methyltransferase H (310 aa).

S-adenosyl-L-methionine is bound by residues 33 to 35, Asp-53, Phe-79, Asp-100, and Gln-107; that span reads AGH.

It belongs to the methyltransferase superfamily. RsmH family.

It localises to the cytoplasm. The enzyme catalyses cytidine(1402) in 16S rRNA + S-adenosyl-L-methionine = N(4)-methylcytidine(1402) in 16S rRNA + S-adenosyl-L-homocysteine + H(+). In terms of biological role, specifically methylates the N4 position of cytidine in position 1402 (C1402) of 16S rRNA. This Desulfitobacterium hafniense (strain DSM 10664 / DCB-2) protein is Ribosomal RNA small subunit methyltransferase H.